The primary structure comprises 281 residues: Small ribosomal subunit protein uS2 (281 aa).

A disordered region spans residues 229–281 (RSGANKTEGEAAEQPMAAWEKELLTNEAPAEASAEAAAPAAAEGETAEAPKAE). A compositionally biased stretch (low complexity) spans 255 to 275 (EAPAEASAEAAAPAAAEGETA).

This sequence belongs to the universal ribosomal protein uS2 family.

The sequence is that of Small ribosomal subunit protein uS2 from Bifidobacterium longum subsp. infantis (strain ATCC 15697 / DSM 20088 / JCM 1222 / NCTC 11817 / S12).